Consider the following 188-residue polypeptide: Inosine triphosphate pyrophosphatase (188 aa).

9-14 (TGNAKK) is an ITP binding site. E39 is a binding site for Mg(2+). ITP contacts are provided by residues K51, 67 to 68 (DT), K84, 143 to 146 (FGWD), K166, and 171 to 172 (HR).

The protein belongs to the HAM1 NTPase family. Homodimer. Requires Mg(2+) as cofactor. It depends on Mn(2+) as a cofactor.

It localises to the cytoplasm. The catalysed reaction is ITP + H2O = IMP + diphosphate + H(+). The enzyme catalyses dITP + H2O = dIMP + diphosphate + H(+). It catalyses the reaction XTP + H2O = XMP + diphosphate + H(+). In terms of biological role, pyrophosphatase that hydrolyzes non-canonical purine nucleotides such as inosine triphosphate (ITP), deoxyinosine triphosphate (dITP) or xanthosine 5'-triphosphate (XTP) to their respective monophosphate derivatives. The enzyme does not distinguish between the deoxy- and ribose forms. Probably excludes non-canonical purines from RNA and DNA precursor pools, thus preventing their incorporation into RNA and DNA and avoiding chromosomal lesions. This Anopheles gambiae (African malaria mosquito) protein is Inosine triphosphate pyrophosphatase.